A 179-amino-acid chain; its full sequence is Large ribosomal subunit protein uL5 (179 aa).

The protein belongs to the universal ribosomal protein uL5 family. As to quaternary structure, part of the 50S ribosomal subunit; part of the 5S rRNA/L5/L18/L25 subcomplex. Contacts the 5S rRNA and the P site tRNA. Forms a bridge to the 30S subunit in the 70S ribosome.

In terms of biological role, this is one of the proteins that bind and probably mediate the attachment of the 5S RNA into the large ribosomal subunit, where it forms part of the central protuberance. In the 70S ribosome it contacts protein S13 of the 30S subunit (bridge B1b), connecting the 2 subunits; this bridge is implicated in subunit movement. Contacts the P site tRNA; the 5S rRNA and some of its associated proteins might help stabilize positioning of ribosome-bound tRNAs. The chain is Large ribosomal subunit protein uL5 from Clostridium perfringens (strain ATCC 13124 / DSM 756 / JCM 1290 / NCIMB 6125 / NCTC 8237 / Type A).